The sequence spans 206 residues: Homoserine/homoserine lactone efflux protein (206 aa).

6 consecutive transmembrane segments (helical) span residues 5-25 (WWFA…SGAI), 45-65 (GLQT…GTLF), 68-88 (SVIA…WLGI), 117-137 (FVNL…PQFI), 148-168 (IVLG…YATL), and 182-202 (MKAL…LLAS).

It belongs to the Rht family.

The protein resides in the cell membrane. Conducts the efflux of homoserine and homoserine lactone. In Escherichia coli O157:H7, this protein is Homoserine/homoserine lactone efflux protein (rhtB).